Consider the following 280-residue polypeptide: 2-dehydro-3-deoxyphosphooctonate aldolase (280 aa).

This sequence belongs to the KdsA family.

It localises to the cytoplasm. The catalysed reaction is D-arabinose 5-phosphate + phosphoenolpyruvate + H2O = 3-deoxy-alpha-D-manno-2-octulosonate-8-phosphate + phosphate. The protein operates within carbohydrate biosynthesis; 3-deoxy-D-manno-octulosonate biosynthesis; 3-deoxy-D-manno-octulosonate from D-ribulose 5-phosphate: step 2/3. Its pathway is bacterial outer membrane biogenesis; lipopolysaccharide biosynthesis. The protein is 2-dehydro-3-deoxyphosphooctonate aldolase of Coxiella burnetii (strain Dugway 5J108-111).